We begin with the raw amino-acid sequence, 145 residues long: Deoxyuridine 5'-triphosphate nucleotidohydrolase (145 aa).

Residues 62 to 64, asparagine 75, and 79 to 81 contribute to the substrate site; these read RSG and TVD.

This sequence belongs to the dUTPase family. Mg(2+) serves as cofactor.

It catalyses the reaction dUTP + H2O = dUMP + diphosphate + H(+). The protein operates within pyrimidine metabolism; dUMP biosynthesis; dUMP from dCTP (dUTP route): step 2/2. Its function is as follows. This enzyme is involved in nucleotide metabolism: it produces dUMP, the immediate precursor of thymidine nucleotides and it decreases the intracellular concentration of dUTP so that uracil cannot be incorporated into DNA. This chain is Deoxyuridine 5'-triphosphate nucleotidohydrolase, found in Gloeothece citriformis (strain PCC 7424) (Cyanothece sp. (strain PCC 7424)).